The primary structure comprises 608 residues: FAD-binding monooxygenase ktnD (608 aa).

N-linked (GlcNAc...) asparagine glycosylation occurs at asparagine 4. A helical membrane pass occupies residues 17-37; that stretch reads ATVVIIGAGVSGMCMAIDLLH. Residues 56-59, 68-69, and tyrosine 74 each bind FAD; these read TWAN and DV. 66–68 is an NADP(+) binding site; sequence ASD. N-linked (GlcNAc...) asparagine glycosylation is present at asparagine 114. NADP(+) is bound by residues 201 to 207 and 224 to 225; these read NGASAIQ and RS. A glycan (N-linked (GlcNAc...) asparagine) is linked at asparagine 325. Residues 535–555 form a helical membrane-spanning segment; it reads ALVSNVTLFLGVALAAGGVYW.

Belongs to the FAD-binding monooxygenase family. FAD is required as a cofactor.

Its subcellular location is the membrane. Its function is as follows. Non-reducing polyketide synthase; part of the gene cluster that mediates the biosynthesis of the bicoumarin kotanin. The non-reducing polyketide synthase ktnS first catalyzes the formation of the pentaketidic 4,7-dihydroxy-5-methylcoumarin from acetyl coenzyme A and 4 malonyl coenzyme A molecules. Further O-methylation by ktnB leads to the formation of 7-demethylsiderin. Then, an oxidative phenol coupling catalyzed by the cytochrome P450 monooxygenase ktnC forms the 8,8'-dimer P-orlandin via dimerization the monomeric precursor, 7-demethylsiderin. P-orlandin is subsequently O-methylated in a stepwise fashion to demethylkotanin and kotanin. The function of ktnD within the pathway has not been determined yet. The polypeptide is FAD-binding monooxygenase ktnD (Aspergillus niger (strain ATCC MYA-4892 / CBS 513.88 / FGSC A1513)).